The primary structure comprises 298 residues: GTPase Era (298 aa).

The 168-residue stretch at 3-170 folds into the Era-type G domain; that stretch reads KSGFVAILGR…IKLLTDNLEE (168 aa). Residues 11–18 form a G1 region; that stretch reads GRPNVGKS. 11 to 18 is a GTP binding site; that stretch reads GRPNVGKS. The segment at 37–41 is G2; the sequence is QTTRN. The G3 stretch occupies residues 58-61; it reads DTPG. GTP contacts are provided by residues 58–62 and 120–123; these read DTPGI and NKID. Residues 120–123 form a G4 region; that stretch reads NKID. Positions 149–151 are G5; the sequence is ISA. The region spanning 201–279 is the KH type-2 domain; that stretch reads TQQEVPHSVA…YLETWVKVKK (79 aa).

Belongs to the TRAFAC class TrmE-Era-EngA-EngB-Septin-like GTPase superfamily. Era GTPase family. In terms of assembly, monomer.

It is found in the cytoplasm. The protein resides in the cell membrane. In terms of biological role, an essential GTPase that binds both GDP and GTP, with rapid nucleotide exchange. Plays a role in 16S rRNA processing and 30S ribosomal subunit biogenesis and possibly also in cell cycle regulation and energy metabolism. In Streptococcus pyogenes serotype M2 (strain MGAS10270), this protein is GTPase Era.